The primary structure comprises 355 residues: Gibberellin 3-beta-dioxygenase 4 (355 aa).

The 101-residue stretch at 203–303 (GRGAIRLNHY…RISIAYLWGG (101 aa)) folds into the Fe2OG dioxygenase domain. Fe cation contacts are provided by His227, Asp229, and His284. Arg294 is a catalytic residue.

The protein belongs to the iron/ascorbate-dependent oxidoreductase family. GA3OX subfamily. Requires L-ascorbate as cofactor. Fe cation serves as cofactor. In terms of tissue distribution, expressed in siliques and in seeds, specifically at the rim of the embryo and the outer integument. Also expressed in flowers. Not detected in roots, stems and leaves.

It carries out the reaction gibberellin A20 + 2-oxoglutarate + O2 = gibberellin A1 + succinate + CO2. It functions in the pathway plant hormone biosynthesis; gibberellin biosynthesis. Functionally, converts the inactive gibberellin (GA) precursors GA9 and GA20 in the bioactives gibberellins GA4 and GA1. Involved in the production of bioactive GA for reproductive development. The polypeptide is Gibberellin 3-beta-dioxygenase 4 (Arabidopsis thaliana (Mouse-ear cress)).